A 790-amino-acid chain; its full sequence is N-methylputrescine oxidase 1, peroxisomal (790 aa).

Residues 1–23 (MATTKQKVTAPSPSPSSSTASCC) form a disordered region. Positions 9–23 (TAPSPSPSSSTASCC) are enriched in low complexity. 423–434 (AFDAGEDGLGKN) lines the substrate pocket. The Proton acceptor role is filled by Asp425. Cys444 and Cys470 are disulfide-bonded. Position 506–511 (506–511 (VANYEY)) interacts with substrate. Residue Tyr509 is the Schiff-base intermediate with substrate; via topaquinone of the active site. Tyr509 carries the 2',4',5'-topaquinone modification. The Cu cation site is built by His559 and His561. Mn(2+)-binding residues include Asp714 and Ile715. Residue His725 coordinates Cu cation.

Belongs to the copper/topaquinone oxidase family. In terms of assembly, homodimer. Requires Cu cation as cofactor. Zn(2+) is required as a cofactor. The cofactor is L-topaquinone. Topaquinone (TPQ) is generated by copper-dependent autoxidation of a specific tyrosyl residue. Mainly expressed in roots, and, to a lower extent, in stems.

The protein resides in the peroxisome. It catalyses the reaction a primary methyl amine + O2 + H2O = an aldehyde + H2O2 + NH4(+). The enzyme catalyses N-methylputrescine + O2 + H2O = 4-methylaminobutanal + H2O2 + NH4(+). Its pathway is alkaloid biosynthesis; nicotine biosynthesis. Involved in the biosynthesis of pyridine alkaloid natural products, leading mainly to the production of anabasine, anatabine, nicotine and nornicotine, effective deterrents against herbivores with antiparasitic and pesticide properties (neurotoxins); nornicotine serves as the precursor in the synthesis of the carcinogen compound N'-nitrosonornicotine (NNN). Amine oxidase which mediates the deamination of N-methylputrescine to produce 4-methylaminobutanal. Oxidizes preferentially N-methylated amines. The chain is N-methylputrescine oxidase 1, peroxisomal from Nicotiana tabacum (Common tobacco).